The chain runs to 146 residues: Large ribosomal subunit protein uL15 (146 aa).

Positions 1–61 (MELNSLKPAA…GGQMPMHRRL (61 aa)) are disordered. Over residues 30 to 39 (TATKGHKGQK) the composition is skewed to basic residues.

It belongs to the universal ribosomal protein uL15 family. In terms of assembly, part of the 50S ribosomal subunit.

Functionally, binds to the 23S rRNA. This chain is Large ribosomal subunit protein uL15, found in Geotalea uraniireducens (strain Rf4) (Geobacter uraniireducens).